We begin with the raw amino-acid sequence, 450 residues long: Zinc metalloproteinase nas-13 (450 aa).

Positions 1–31 are cleaved as a signal peptide; it reads MPSPTSSSASVFSSHLFFVFCIFSQIAQSYA. N-linked (GlcNAc...) asparagine glycosylation occurs at Asn-68. A Peptidase M12A domain is found at 110-303; it reads NAVRQTYLKW…YKINMLYNCP (194 aa). Intrachain disulfides connect Cys-152–Cys-302 and Cys-174–Cys-193. His-201 contributes to the Zn(2+) binding site. The active site involves Glu-202. Zn(2+)-binding residues include His-205 and His-211. A glycan (N-linked (GlcNAc...) asparagine) is linked at Asn-225. Residues 349–351 carry the Cell attachment site motif; the sequence is RGD. Intrachain disulfides connect Cys-368–Cys-404, Cys-375–Cys-397, Cys-384–Cys-401, Cys-414–Cys-450, Cys-421–Cys-443, and Cys-430–Cys-447. ShKT domains are found at residues 368-404 and 414-450; these read CEDR…CGKC and CEDA…CNFC. Residue Asn-431 is glycosylated (N-linked (GlcNAc...) asparagine).

Requires Zn(2+) as cofactor.

It localises to the secreted. In terms of biological role, metalloprotease. This Caenorhabditis elegans protein is Zinc metalloproteinase nas-13 (nas-13).